Here is a 972-residue protein sequence, read N- to C-terminus: MSLPRCPRTRTVMFSRTLTRCYPQRTLWIAILCVICSWTLSTAGATTIRDKEVKPDAPQDLTAIPVKAEAIVLTWKKPLKGQTDGYIVVYCLKRNKGNGCERQKIEGGNVTEVEVTNLYANHTYQFQVQSWYSDHPKGASTGYIEASGTPPIPPTLRRNFKGLVEKSLGFEHKIPCPVKADPRPYTRWLKNGTDLTPNDPDDNVSFTKTSIVFKRLRFSDAGLYTCVASNFFGQPIHVNFTLIVVDTHSESYAESSVLESFSSLELETGPYNETEEEETHFPRFTDTERMEPEKPLPSNTKVRLECGARGTPTPNITWIKDGVQKWKINVIRPTRVEEKGFVLIIRRAIVRDTGKYTCIVSNQYGTIEHTYDVKIRERLPVKPIMSPMKNVTATVGSNTSFVCRVVNDLTPHFAWMRFNGTNNTKQRLTDIDDHISILQQRWVEEPMLTCDEFLDVFYQNQSKRMLECLHLIQLETQGGMEEANQLKLYNVQYEDEGPYLCVAGNFYGMSWEGAYLDVVEPTTQAPVRTNPPAVYIPNNMQPTSKTQLIIFSVVGFVVVLILVTCIAILCKQTQVRHRRPSDKPDISGPKHLYRQTSVDSTQSIAPLFGGRNRLTSSLTVISEYDIPLDPEWEFPRDRLTVGKTIGEGAFGKVVIGEAVGIVCQEKTSTVAVKMLKANAMDREFSDLISELAMMKMIGKNPNIINLLGCCTQEGPPYVIVEFAHHGNLRDFLRSRRPPEEYEKSILLTTSQTLTNKDLMSMAYQVARGMDFLASKKCIHRDLAARNVLVTEDFEMKICDFGLARDIHYIDFYRKTTDGRLPVKWMAPEALFDRMFTTQSDVWSFGILLWEIMTLGGTPYPSVPVEQMFDYLRSGKRLEKPQNTSLEIYHILCECWRTSPGQRPTFCELVEDLDRIISVSSNQDYLDLEAVGDAPVKTFQESERMAFMGFRAPLSPQVYYKVPQTRDCCPYAN.

The signal sequence occupies residues 1 to 43 (MSLPRCPRTRTVMFSRTLTRCYPQRTLWIAILCVICSWTLSTA). Topologically, residues 44-547 (GATTIRDKEV…NNMQPTSKTQ (504 aa)) are extracellular. In terms of domain architecture, Fibronectin type-III spans 57 to 152 (APQDLTAIPV…YIEASGTPPI (96 aa)). N109, N121, N191, N203, N239, N272, N315, N390, N398, N419, N422, and N460 each carry an N-linked (GlcNAc...) asparagine glycan. The Ig-like C2-type 1 domain occupies 150 to 242 (PPIPPTLRRN…GQPIHVNFTL (93 aa)). C176 and C226 are joined by a disulfide. Ig-like C2-type domains follow at residues 282–374 (PRFT…YDVK) and 383–517 (PIMS…AYLD). C306 and C358 form a disulfide bridge. C403 and C501 are oxidised to a cystine. A helical transmembrane segment spans residues 548 to 568 (LIIFSVVGFVVVLILVTCIAI). The Cytoplasmic segment spans residues 569-972 (LCKQTQVRHR…QTRDCCPYAN (404 aa)). The region spanning 639-925 (LTVGKTIGEG…ISVSSNQDYL (287 aa)) is the Protein kinase domain. Residues 645 to 653 (IGEGAFGKV) and K673 contribute to the ATP site. Catalysis depends on D781, which acts as the Proton acceptor. Residue Y812 is modified to Phosphotyrosine; by autocatalysis.

This sequence belongs to the protein kinase superfamily. Tyr protein kinase family. Fibroblast growth factor receptor subfamily.

The protein resides in the membrane. The catalysed reaction is L-tyrosyl-[protein] + ATP = O-phospho-L-tyrosyl-[protein] + ADP + H(+). Receptor for basic fibroblast growth factor. The protein is Fibroblast growth factor receptor (FGFR) of Strongylocentrotus purpuratus (Purple sea urchin).